The following is a 612-amino-acid chain: UvrABC system protein C (612 aa).

The region spanning 21 to 99 is the GIY-YIG domain; the sequence is KLPGVYQMYD…IKSQKPPFNI (79 aa). A UVR domain is found at 209-244; it reads EVLQQELQVEMEQASQALDFERAVVVRDQITDLRQV.

The protein belongs to the UvrC family. Interacts with UvrB in an incision complex.

The protein resides in the cytoplasm. In terms of biological role, the UvrABC repair system catalyzes the recognition and processing of DNA lesions. UvrC both incises the 5' and 3' sides of the lesion. The N-terminal half is responsible for the 3' incision and the C-terminal half is responsible for the 5' incision. This Saccharophagus degradans (strain 2-40 / ATCC 43961 / DSM 17024) protein is UvrABC system protein C.